The chain runs to 141 residues: uncharacterized protein (141 aa).

This sequence belongs to the peptidase C56 family.

This is an uncharacterized protein from Streptomyces lividans.